A 135-amino-acid chain; its full sequence is Ribonuclease P protein component (135 aa).

It belongs to the RnpA family. Consists of a catalytic RNA component (M1 or rnpB) and a protein subunit.

The enzyme catalyses Endonucleolytic cleavage of RNA, removing 5'-extranucleotides from tRNA precursor.. RNaseP catalyzes the removal of the 5'-leader sequence from pre-tRNA to produce the mature 5'-terminus. It can also cleave other RNA substrates such as 4.5S RNA. The protein component plays an auxiliary but essential role in vivo by binding to the 5'-leader sequence and broadening the substrate specificity of the ribozyme. The protein is Ribonuclease P protein component of Pseudomonas aeruginosa (strain LESB58).